The primary structure comprises 540 residues: Membrane protein insertase YidC (540 aa).

The chain crosses the membrane as a helical span at residues 6–26 (NILLIALALVSFLLFQQWQVA). Residues 36-47 (QAQSSSSLPAPS) are compositionally biased toward low complexity. The segment at 36–63 (QAQSSSSLPAPSFADELDPVPGQQQASA) is disordered. The next 4 membrane-spanning stretches (helical) occupy residues 342–362 (AFIQSFVGNWGVAIICLTFIV), 417–437 (LGGCLPLVLQMPIFIALYWAL), 455–475 (LSAQDPYYILPLLMGASMFLI), and 496–516 (PVMFTFFFLFFPSGLVLYWLV).

This sequence belongs to the OXA1/ALB3/YidC family. Type 1 subfamily. In terms of assembly, interacts with the Sec translocase complex via SecD. Specifically interacts with transmembrane segments of nascent integral membrane proteins during membrane integration.

It localises to the cell inner membrane. Functionally, required for the insertion and/or proper folding and/or complex formation of integral membrane proteins into the membrane. Involved in integration of membrane proteins that insert both dependently and independently of the Sec translocase complex, as well as at least some lipoproteins. Aids folding of multispanning membrane proteins. The polypeptide is Membrane protein insertase YidC (Vibrio parahaemolyticus serotype O3:K6 (strain RIMD 2210633)).